The chain runs to 143 residues: Large ribosomal subunit protein uL16 (143 aa).

Basic residues predominate over residues 1–17; the sequence is MLQPKKTKFRRSQKGRM. The tract at residues 1-25 is disordered; that stretch reads MLQPKKTKFRRSQKGRMKGNAQRGN.

It belongs to the universal ribosomal protein uL16 family. In terms of assembly, part of the 50S ribosomal subunit.

In terms of biological role, binds 23S rRNA and is also seen to make contacts with the A and possibly P site tRNAs. In Azobacteroides pseudotrichonymphae genomovar. CFP2, this protein is Large ribosomal subunit protein uL16.